Consider the following 218-residue polypeptide: Adenylate kinase (218 aa).

10–15 (GAGKGT) contributes to the ATP binding site. The interval 30–59 (STGDMLRAAVKEETPLGRKAKEVMDSGNLV) is NMP. AMP-binding positions include Thr31, Arg36, 57–59 (NLV), 85–88 (GFPR), and Gln92. The LID stretch occupies residues 122–159 (GRRVHPASGRTYHLTFNPPQQQGVDDETGEPLIQRVDD). ATP contacts are provided by residues Arg123 and 132–133 (TY). AMP-binding residues include Arg156 and Arg167. Gly203 provides a ligand contact to ATP.

This sequence belongs to the adenylate kinase family. Monomer.

The protein localises to the cytoplasm. The enzyme catalyses AMP + ATP = 2 ADP. Its pathway is purine metabolism; AMP biosynthesis via salvage pathway; AMP from ADP: step 1/1. Catalyzes the reversible transfer of the terminal phosphate group between ATP and AMP. Plays an important role in cellular energy homeostasis and in adenine nucleotide metabolism. The chain is Adenylate kinase from Chlorobium phaeovibrioides (strain DSM 265 / 1930) (Prosthecochloris vibrioformis (strain DSM 265)).